The chain runs to 408 residues: Protein EcsB (408 aa).

9 helical membrane passes run 30–50 (HLVIVLIFFLAGAASWYSKWI), 53–73 (IPAHFPSFWVMAVLFSLVLTS), 111–131 (LFPLIALSIVAMPLYFAVTPG), 134–154 (LVSYAAVFVQLLLLKAWNQVM), 180–200 (LVLYFVFQSVYMYALLVYVIM), 284–304 (YLGILVRLTIVFALIIMYVSA), 308–328 (IAAVLTVFAIFITGIQLLPLF), 351–371 (YFSLLKTALSIQALLMSVASA), and 374–394 (AGLTGFLYALIGSAVLIFVVL).

It localises to the cell membrane. Functionally, presumed to form part of an ABC-transporter, it may form a transport channel. This is Protein EcsB (ecsB) from Bacillus subtilis (strain 168).